The following is a 429-amino-acid chain: Citrate synthase, plasmid (429 aa).

Catalysis depends on residues histidine 306 and aspartate 364.

Belongs to the citrate synthase family.

The enzyme catalyses oxaloacetate + acetyl-CoA + H2O = citrate + CoA + H(+). It participates in carbohydrate metabolism; tricarboxylic acid cycle; isocitrate from oxaloacetate: step 1/2. The exact function of the plasmid-encoded citrate synthase is not clear, it could help nodulation by allowing the bacteria to use citrate as a chelator of iron and calcium. The sequence is that of Citrate synthase, plasmid (pcsA) from Rhizobium tropici.